A 374-amino-acid chain; its full sequence is Putative glutamate--cysteine ligase 2 (374 aa).

The protein belongs to the glutamate--cysteine ligase type 2 family. YbdK subfamily.

It catalyses the reaction L-cysteine + L-glutamate + ATP = gamma-L-glutamyl-L-cysteine + ADP + phosphate + H(+). In terms of biological role, ATP-dependent carboxylate-amine ligase which exhibits weak glutamate--cysteine ligase activity. The protein is Putative glutamate--cysteine ligase 2 of Leptothrix cholodnii (strain ATCC 51168 / LMG 8142 / SP-6) (Leptothrix discophora (strain SP-6)).